The chain runs to 428 residues: Adenylosuccinate synthetase (428 aa).

GTP-binding positions include 12–18 (GDEGKGK) and 40–42 (GHT). Asp13 acts as the Proton acceptor in catalysis. Positions 13 and 40 each coordinate Mg(2+). IMP-binding positions include 13-16 (DEGK), 38-41 (NAGH), Thr128, Arg142, Gln223, Thr238, and Arg302. His41 functions as the Proton donor in the catalytic mechanism. 298-304 (TTTGRPR) contributes to the substrate binding site. Residues Arg304, 330–332 (SID), and 412–414 (SVG) contribute to the GTP site.

It belongs to the adenylosuccinate synthetase family. As to quaternary structure, homodimer. It depends on Mg(2+) as a cofactor.

The protein resides in the cytoplasm. The catalysed reaction is IMP + L-aspartate + GTP = N(6)-(1,2-dicarboxyethyl)-AMP + GDP + phosphate + 2 H(+). Its pathway is purine metabolism; AMP biosynthesis via de novo pathway; AMP from IMP: step 1/2. In terms of biological role, plays an important role in the de novo pathway of purine nucleotide biosynthesis. Catalyzes the first committed step in the biosynthesis of AMP from IMP. The chain is Adenylosuccinate synthetase from Shouchella clausii (strain KSM-K16) (Alkalihalobacillus clausii).